The following is a 304-amino-acid chain: DCN1-like protein 3 (304 aa).

Disordered regions lie at residues 1 to 87 (MGQC…EESS) and 284 to 304 (EGEGRGALSSGPEGLCPEEQT). G2 is lipidated: N-myristoyl glycine. Residues 86 to 278 (SSLQRLEELF…LFDTFVEWEM (193 aa)) form the DCUN1 domain.

As to quaternary structure, part of a complex containing DCUN1D3, CUL3 and RBX1. Interacts (via the DCUN1 domain) with the unneddylated cullins: interacts with CUL1, CUL2, CUL3, CUL4A, CUL4B and CUL5; these interactions promote the cullin neddylation and the identity of the cullin dictates the affinity of the interaction. Interacts preferentially with CUL3; this interaction triggers the relocalization of CUL3 to the cell membrane where CUL3 is neddylated. Interacts (via DCUN1 domain) with RBX1. May also interact with regulators or subunits of cullin-RING ligases such as RNF7, ELOB and DDB1; these interactions are bridged by cullins. Interacts (via DCUN1 domain) with CAND1; this interaction is bridged by cullins and strongly inhibits cullin neddylation. These CAND-cullin-DCNL complexes can only be neddylated in the presence of a substrate adapter. Interacts (via DCUN1 domain) with the N-terminally acetylated form of UBE2M and UBE2F.

Its subcellular location is the cell membrane. The protein localises to the cytoplasm. It is found in the nucleus. The protein resides in the perinuclear region. Contributes to the neddylation of all cullins by transferring NEDD8 from N-terminally acetylated NEDD8-conjugating E2s enzyme to different cullin C-terminal domain-RBX complexes and may play a role in the cell cycle progression by regulating the SCF ubiquitin E3 ligase complex, after UV damage. At the cell membrane, can promote and as well inhibit cullins neddylation. This is DCN1-like protein 3 from Bos taurus (Bovine).